A 306-amino-acid polypeptide reads, in one-letter code: Putative S-adenosyl-L-methionine-dependent methyltransferase MAP_4190c (306 aa).

Residues Asp129 and 158-159 (DL) contribute to the S-adenosyl-L-methionine site.

Belongs to the UPF0677 family.

Functionally, exhibits S-adenosyl-L-methionine-dependent methyltransferase activity. This Mycolicibacterium paratuberculosis (strain ATCC BAA-968 / K-10) (Mycobacterium paratuberculosis) protein is Putative S-adenosyl-L-methionine-dependent methyltransferase MAP_4190c.